Here is a 133-residue protein sequence, read N- to C-terminus: Sec-independent protein translocase protein TatB (133 aa).

The chain crosses the membrane as a helical span at residues 1 to 21 (MFDIGFWELVLIAIVALVVLG). Residues 67 to 133 (EQMGMQNLSP…ASQPAEKKAE (67 aa)) form a disordered region. Residues 70-84 (GMQNLSPELQKSVES) are compositionally biased toward polar residues. The span at 97–116 (AATPSSEASSTSSNPSSATE) shows a compositional bias: low complexity.

The protein belongs to the TatB family. As to quaternary structure, the Tat system comprises two distinct complexes: a TatABC complex, containing multiple copies of TatA, TatB and TatC subunits, and a separate TatA complex, containing only TatA subunits. Substrates initially bind to the TatABC complex, which probably triggers association of the separate TatA complex to form the active translocon.

It localises to the cell inner membrane. Part of the twin-arginine translocation (Tat) system that transports large folded proteins containing a characteristic twin-arginine motif in their signal peptide across membranes. Together with TatC, TatB is part of a receptor directly interacting with Tat signal peptides. TatB may form an oligomeric binding site that transiently accommodates folded Tat precursor proteins before their translocation. The polypeptide is Sec-independent protein translocase protein TatB (Vibrio cholerae serotype O1 (strain ATCC 39315 / El Tor Inaba N16961)).